The primary structure comprises 122 residues: Large ribosomal subunit protein uL14 (122 aa).

It belongs to the universal ribosomal protein uL14 family. In terms of assembly, part of the 50S ribosomal subunit. Forms a cluster with proteins L3 and L19. In the 70S ribosome, L14 and L19 interact and together make contacts with the 16S rRNA in bridges B5 and B8.

Functionally, binds to 23S rRNA. Forms part of two intersubunit bridges in the 70S ribosome. This chain is Large ribosomal subunit protein uL14, found in Borrelia recurrentis (strain A1).